A 250-amino-acid polypeptide reads, in one-letter code: Non-specific acid phosphatase (250 aa).

Positions 1-20 (MKSRYLLFFLPLIVAKYTSA) are cleaved as a signal peptide.

It belongs to the class A bacterial acid phosphatase family. Homodimer.

It localises to the periplasm. The catalysed reaction is a phosphate monoester + H2O = an alcohol + phosphate. The sequence is that of Non-specific acid phosphatase (phoN) from Salmonella typhi.